The following is a 221-amino-acid chain: PKHD-type hydroxylase P9303_20491 (221 aa).

The Fe2OG dioxygenase domain maps to 80–174; the sequence is HIHGVMFSRS…RLVCVGWIQS (95 aa). The Fe cation site is built by His98, Asp100, and His155. Arg165 contributes to the 2-oxoglutarate binding site.

Fe(2+) serves as cofactor. Requires L-ascorbate as cofactor.

The sequence is that of PKHD-type hydroxylase P9303_20491 from Prochlorococcus marinus (strain MIT 9303).